Here is a 486-residue protein sequence, read N- to C-terminus: Serine/threonine-protein kinase 33 (486 aa).

A disordered region spans residues Val39 to Lys100. Over residues Glu41–Phe53 the composition is skewed to polar residues. Positions Pro57–Ser66 are enriched in basic and acidic residues. Polar residues predominate over residues Asp68 to Ser80. One can recognise a Protein kinase domain in the interval Tyr116 to Leu381. ATP contacts are provided by residues Leu122–Val130 and Lys145. The active-site Proton acceptor is the Asp238. The disordered stretch occupies residues Lys402–Arg451. At Ser407 the chain carries Phosphoserine. A compositionally biased stretch (basic and acidic residues) spans Thr413–Lys426. Over residues Tyr428–Ser440 the composition is skewed to polar residues.

Belongs to the protein kinase superfamily. CAMK Ser/Thr protein kinase family. CaMK subfamily. In terms of assembly, interacts with vimentin/VIM. Autophosphorylated.

The protein localises to the cytoplasm. It is found in the perinuclear region. It catalyses the reaction L-seryl-[protein] + ATP = O-phospho-L-seryl-[protein] + ADP + H(+). The enzyme catalyses L-threonyl-[protein] + ATP = O-phospho-L-threonyl-[protein] + ADP + H(+). Functionally, serine/threonine protein kinase which phosphorylates vimentin/VIM. Therefore may play a specific role in the dynamic behavior of the intermediate filament cytoskeleton. The protein is Serine/threonine-protein kinase 33 (STK33) of Bos taurus (Bovine).